A 215-amino-acid polypeptide reads, in one-letter code: Oligoribonuclease (215 aa).

The region spanning 5-170 (LVWIDCEMTG…ADIHESIREL (166 aa)) is the Exonuclease domain. Tyr-127 is a catalytic residue. Residues 196-215 (LGPPGKDAADTDSAAGHTTG) form a disordered region.

The protein belongs to the oligoribonuclease family.

Its subcellular location is the cytoplasm. Functionally, 3'-to-5' exoribonuclease specific for small oligoribonucleotides. The polypeptide is Oligoribonuclease (Mycobacterium sp. (strain JLS)).